A 67-amino-acid chain; its full sequence is Type 3 secretion system chaperone PscE (67 aa).

Residues 16 to 37 (HAAALRQRLQAALAECRRELAR) adopt a coiled-coil conformation.

This sequence belongs to the YscE family. As to quaternary structure, forms a stable ternary complex with PscF/SctF and PscG within the cytoplasm. Co-stabilized by PscG.

It is found in the cytoplasm. Functionally, chaperone of the type III secretion system (T3SS), also called injectisome, which is used to inject bacterial effector proteins into eukaryotic host cells, facilitating the establishment and dissemination of infection. Along with PscG, prevents premature polymerization of the PscF/SctF needle protein within the cytoplasm. Required for type III secretion needle assembly. Also required for cytotoxicity by influencing PscF/SctF levels. This Pseudomonas aeruginosa (strain ATCC 15692 / DSM 22644 / CIP 104116 / JCM 14847 / LMG 12228 / 1C / PRS 101 / PAO1) protein is Type 3 secretion system chaperone PscE (pscE).